A 406-amino-acid polypeptide reads, in one-letter code: RILP-like protein 1 (406 aa).

Residue Ser-7 is modified to Phosphoserine. The RH1 domain occupies 10–97 (AALSALEKNV…RVERMDRIEK (88 aa)). The residue at position 47 (Cys-47) is an S-nitrosocysteine. Residues 76–258 (ELDELRLELD…KLRERLQGEH (183 aa)) are a coiled coil. 2 disordered regions span residues 255–280 (QGEH…ESIS) and 330–354 (EIEE…QPES). Ser-259 carries the post-translational modification Phosphoserine. A compositionally biased stretch (acidic residues) spans 262–280 (GEEEEAEIQPQPDGEESIS). Residues 294–359 (RPRFTLQELR…PQPESGIKRL (66 aa)) enclose the RH2 domain.

The protein belongs to the RILPL family. Interacts (when S-nitrosylated) with GAPDH. Interacts with RAB8A; interaction is dependent on the phosphorylation of 'Thr-72' of RAB8A. Interacts with RAB10 and RAB12; the interaction is dependent on the phosphorylation of 'Thr-73' of RAB10, and 'Ser-105' of RAB12. S-nitrosylation is required for the interaction with GAPDH.

It localises to the cytoplasm. Its subcellular location is the cytosol. The protein resides in the cell projection. It is found in the cilium. The protein localises to the cytoskeleton. It localises to the microtubule organizing center. Its subcellular location is the centrosome. The protein resides in the centriole. Its function is as follows. Neuroprotective protein, which acts by sequestring GAPDH in the cytosol and prevent the apoptotic function of GAPDH in the nucleus. Competes with SIAH1 for binding GAPDH. Does not regulate lysosomal morphology and distribution. Plays a role in the regulation of cell shape and polarity. Plays a role in cellular protein transport, including protein transport away from primary cilia. Binds to RAB10 following LRRK2-mediated RAB10 phosphorylation which leads to inhibition of ciliogenesis. This chain is RILP-like protein 1 (Rilpl1), found in Mus musculus (Mouse).